Consider the following 433-residue polypeptide: Serendipity locus protein delta (433 aa).

The ZAD domain occupies 1–90 (MDTCFFCGAV…TQKRLTTQLK (90 aa)). The Zn(2+) site is built by Cys-4, Cys-7, Cys-61, and Cys-64. Positions 141-162 (DTEIKREFVDEEEEEDDDDDDE) are disordered. A compositionally biased stretch (acidic residues) spans 149–162 (VDEEEEEDDDDDDE). A Nuclear localization signal motif is present at residues 187–193 (PTKKRVK). 7 C2H2-type zinc fingers span residues 194 to 217 (QECT…SEEH), 223 to 245 (HICP…MNLH), 251 to 273 (KQCR…MRMH), 279 to 301 (YQCE…RLRH), 308 to 330 (IICS…TLIH), 337 to 359 (HYCS…MKTH), and 405 to 428 (GFCL…QFDH).

Homodimer (via ZAD domain) in solution. Binds DNA as a homodimer. N-terminal regions of the protein are required, in addition to the zinc fingers, for the specificity of chromatin-binding. Predominantly localized to the sub- and supraesophagal ganglia and the ventral nerve cord in the embryo, after dorsal closure.

The protein localises to the nucleus. Its function is as follows. Transcriptional activator that controls bicoid gene expression during oogenesis. Found in transcriptionally active cells. Binds to specific sites on polytene chromosomes of third instar larvae. Binds to the consensus DNA sequence 5'-YTAGAGATGGRAA-3'. This chain is Serendipity locus protein delta (Sry-delta), found in Drosophila melanogaster (Fruit fly).